Here is a 202-residue protein sequence, read N- to C-terminus: Small ribosomal subunit protein uS4 (202 aa).

The interval 16-43 (GELPGLSRKTPRRAYPPGQHGQGRRKRS) is disordered. Residues 90-152 (MRLDNTVFRL…DNSRRMVETN (63 aa)) enclose the S4 RNA-binding domain.

The protein belongs to the universal ribosomal protein uS4 family. In terms of assembly, part of the 30S ribosomal subunit. Contacts protein S5. The interaction surface between S4 and S5 is involved in control of translational fidelity.

One of the primary rRNA binding proteins, it binds directly to 16S rRNA where it nucleates assembly of the body of the 30S subunit. Its function is as follows. With S5 and S12 plays an important role in translational accuracy. This is Small ribosomal subunit protein uS4 from Crocosphaera subtropica (strain ATCC 51142 / BH68) (Cyanothece sp. (strain ATCC 51142)).